Reading from the N-terminus, the 583-residue chain is Phytoene desaturase (583 aa).

A signal peptide spans 1–20 (MAPPKHVIIIGAGAGGTATA). The chain crosses the membrane as a helical span at residues 531 to 551 (IIWFLLIALFAATLVLFIAFP).

It belongs to the carotenoid/retinoid oxidoreductase family. NAD(+) serves as cofactor.

It is found in the membrane. The catalysed reaction is 15-cis-phytoene + 5 A = all-trans-3,4-didehydrolycopene + 5 AH2. It participates in carotenoid biosynthesis; lycopene biosynthesis. Functionally, phytoene desaturase involved in the carotenoid biosynthesis pathway. Converts phytoene into 3,4-didehydrolycopene via the intermediary of phytofluene, zeta-carotene, neurosporene and lycopene, by introducing up to five double bonds into phytoene. This chain is Phytoene desaturase (carB), found in Phycomyces blakesleeanus (strain ATCC 8743b / DSM 1359 / FGSC 10004 / NBRC 33097 / NRRL 1555).